The following is a 357-amino-acid chain: Protein RecA (357 aa).

79-86 (GPESSGKT) lines the ATP pocket.

This sequence belongs to the RecA family.

It is found in the cytoplasm. Functionally, can catalyze the hydrolysis of ATP in the presence of single-stranded DNA, the ATP-dependent uptake of single-stranded DNA by duplex DNA, and the ATP-dependent hybridization of homologous single-stranded DNAs. It interacts with LexA causing its activation and leading to its autocatalytic cleavage. This Chloroherpeton thalassium (strain ATCC 35110 / GB-78) protein is Protein RecA.